Here is a 386-residue protein sequence, read N- to C-terminus: Putative gustatory receptor 92a (386 aa).

The Cytoplasmic segment spans residues 1-14 (MFEFLHQMSAPKLS). The helical transmembrane segment at 15–35 (TSILRYIFRYAQFIGVIFFCL) threads the bilayer. Residues 36-79 (HTRKDDKTVFIRNWLKWLNVTHRIITFTRFFWVYIASISIKTNR) are Extracellular-facing. N-linked (GlcNAc...) asparagine glycosylation is present at Asn-54. The chain crosses the membrane as a helical span at residues 80-100 (VLQVLHGMRLVLSIPNVAVIL). Residues 101 to 141 (CYHIFRGPEIIDLINQFLRLFRQVSDLFKTKTPGFGGRREL) are Cytoplasmic-facing. The helical transmembrane segment at 142-162 (ILILLNLISFAHEQTYLWFTI) threads the bilayer. At 163–169 (RKGFSWR) the chain is on the extracellular side. A helical membrane pass occupies residues 170 to 190 (FLIDWWCDFYLVSATNIFIHI). Residues 191-256 (NSIGYLSLGV…YHTSIMFHKL (66 aa)) lie on the Cytoplasmic side of the membrane. A helical membrane pass occupies residues 257–277 (FVPLLFLALIYKVLLIALIGF). At 278-287 (NVAVEFYLNS) the chain is on the extracellular side. Residues 288–308 (FIFWILLGKHVLDLFLVTVSV) traverse the membrane as a helical segment. The Cytoplasmic segment spans residues 309–356 (EGAVNQFLNIGMQFGNVGDLSKFQTTLDTLFLHLRLGHFRVSILGLFD). A helical membrane pass occupies residues 357–377 (VTQMQYLQFLSALLSGLAFIA). At 378–386 (QYRMQVGNG) the chain is on the extracellular side.

Belongs to the insect chemoreceptor superfamily. Gustatory receptor (GR) family. Gr93a subfamily.

Its subcellular location is the cell membrane. Functionally, probable gustatory receptor which mediates acceptance or avoidance behavior, depending on its substrates. The protein is Putative gustatory receptor 92a (Gr92a) of Drosophila melanogaster (Fruit fly).